The sequence spans 282 residues: Ribosomal RNA small subunit methyltransferase A (282 aa).

Asparagine 28, leucine 30, glycine 55, glutamate 77, aspartate 103, and asparagine 123 together coordinate S-adenosyl-L-methionine.

Belongs to the class I-like SAM-binding methyltransferase superfamily. rRNA adenine N(6)-methyltransferase family. RsmA subfamily.

The protein localises to the cytoplasm. The enzyme catalyses adenosine(1518)/adenosine(1519) in 16S rRNA + 4 S-adenosyl-L-methionine = N(6)-dimethyladenosine(1518)/N(6)-dimethyladenosine(1519) in 16S rRNA + 4 S-adenosyl-L-homocysteine + 4 H(+). In terms of biological role, specifically dimethylates two adjacent adenosines (A1518 and A1519) in the loop of a conserved hairpin near the 3'-end of 16S rRNA in the 30S particle. May play a critical role in biogenesis of 30S subunits. This Afipia carboxidovorans (strain ATCC 49405 / DSM 1227 / KCTC 32145 / OM5) (Oligotropha carboxidovorans) protein is Ribosomal RNA small subunit methyltransferase A.